Consider the following 528-residue polypeptide: Glucose-6-phosphate isomerase (528 aa).

The active-site Proton donor is E322. Residues H351 and K455 contribute to the active site.

Belongs to the GPI family.

It localises to the cytoplasm. It catalyses the reaction alpha-D-glucose 6-phosphate = beta-D-fructose 6-phosphate. It participates in carbohydrate biosynthesis; gluconeogenesis. The protein operates within carbohydrate degradation; glycolysis; D-glyceraldehyde 3-phosphate and glycerone phosphate from D-glucose: step 2/4. Functionally, catalyzes the reversible isomerization of glucose-6-phosphate to fructose-6-phosphate. This Nostoc sp. (strain PCC 7120 / SAG 25.82 / UTEX 2576) protein is Glucose-6-phosphate isomerase.